Here is a 37-residue protein sequence, read N- to C-terminus: Large ribosomal subunit protein bL36 (37 aa).

The protein belongs to the bacterial ribosomal protein bL36 family.

This is Large ribosomal subunit protein bL36 from Mycoplasma pneumoniae (strain ATCC 29342 / M129 / Subtype 1) (Mycoplasmoides pneumoniae).